The chain runs to 448 residues: Proline iminopeptidase aneH (448 aa).

The region spanning 64–191 (PWMLYLQGGP…VEVFIGGGPC (128 aa)) is the AB hydrolase-1 domain. S164 acts as the Nucleophile in catalysis. The active site involves D397. The active-site Proton donor is H425.

It belongs to the peptidase S33 family. In terms of assembly, homooligomer.

The protein resides in the cytoplasm. It carries out the reaction Release of N-terminal proline from a peptide.. The protein operates within secondary metabolite biosynthesis. In terms of biological role, proline iminopeptidase; part of the gene cluster that mediates the biosynthesis of aculenes, a unique type of norsesquiterpenes that contain a nordaucane skeleton linked to an L-proline moiety and are of mixed biosynthetic origin. The pathway begins with the synthesis of dauca-4,7-diene by the terpene cyclase aneC using farnesyl pyrophosphate (FPP) as substrate. The cytochrome P450 monooxygenase aneF then performs the initial oxidation at C-12 of dauca-4,7-diene to yield asperaculane D. Asperaculane D is substrate of the cytochrome P450 monooxygenase aneD for C-10 hydroxylation to yield asperaculane E. The cytochrome P450 monooxygenase aneG then converts asperaculane E into aculene D via C-2 oxidation. The monomodular nonribosomal peptide synthtase aneB adenylates L-proline and the thiohydrolase aneE transfers this activated L-proline derivative to aculenes D and C to produce respectively aculenes B and A. The dioxygenase aneA converts aculene D into aculene C, and aculene B into aculene A by introducing the 5,6-alkene moiety. Asperculanes A, B, C and F, as well as 14-prolyl asperculane C, might be shunt products of the pathway. The protein is Proline iminopeptidase aneH of Aspergillus aculeatus (strain ATCC 16872 / CBS 172.66 / WB 5094).